The following is a 157-amino-acid chain: MIVLGIDPALGNLGWALVAKEYTKLKYLASGTIKTHSKDEIHNRLAFINSTLEKVILKYQPNIAAIEETFINTNSVTSLKLGYARGAIMSLIGRYNLNMQEFKPNTVKKTVTGYGHAKKEQILYMIKHLIPGTDLITNSDEADAVALAYTSLVTKKY.

Residues Asp-7, Glu-67, and Asp-140 contribute to the active site. Mg(2+) is bound by residues Asp-7, Glu-67, and Asp-140.

It belongs to the RuvC family. In terms of assembly, homodimer which binds Holliday junction (HJ) DNA. The HJ becomes 2-fold symmetrical on binding to RuvC with unstacked arms; it has a different conformation from HJ DNA in complex with RuvA. In the full resolvosome a probable DNA-RuvA(4)-RuvB(12)-RuvC(2) complex forms which resolves the HJ. The cofactor is Mg(2+).

It localises to the cytoplasm. The enzyme catalyses Endonucleolytic cleavage at a junction such as a reciprocal single-stranded crossover between two homologous DNA duplexes (Holliday junction).. Functionally, the RuvA-RuvB-RuvC complex processes Holliday junction (HJ) DNA during genetic recombination and DNA repair. Endonuclease that resolves HJ intermediates. Cleaves cruciform DNA by making single-stranded nicks across the HJ at symmetrical positions within the homologous arms, yielding a 5'-phosphate and a 3'-hydroxyl group; requires a central core of homology in the junction. The consensus cleavage sequence is 5'-(A/T)TT(C/G)-3'. Cleavage occurs on the 3'-side of the TT dinucleotide at the point of strand exchange. HJ branch migration catalyzed by RuvA-RuvB allows RuvC to scan DNA until it finds its consensus sequence, where it cleaves and resolves the cruciform DNA. The protein is Crossover junction endodeoxyribonuclease RuvC of Rickettsia typhi (strain ATCC VR-144 / Wilmington).